We begin with the raw amino-acid sequence, 901 residues long: Protein translocase subunit SecA (901 aa).

ATP contacts are provided by residues glutamine 89, 107–111 (GEGKT), and aspartate 502. The segment at 838 to 883 (YQQQQAETEAQMHPEHEEAEGGEVSGRVAGFDETDPTTWGNPSRND) is disordered. Positions 885, 887, 896, and 897 each coordinate Zn(2+).

Belongs to the SecA family. Monomer and homodimer. Part of the essential Sec protein translocation apparatus which comprises SecA, SecYEG and auxiliary proteins SecDF-YajC and YidC. It depends on Zn(2+) as a cofactor.

The protein localises to the cell inner membrane. The protein resides in the cytoplasm. The enzyme catalyses ATP + H2O + cellular proteinSide 1 = ADP + phosphate + cellular proteinSide 2.. In terms of biological role, part of the Sec protein translocase complex. Interacts with the SecYEG preprotein conducting channel. Has a central role in coupling the hydrolysis of ATP to the transfer of proteins into and across the cell membrane, serving both as a receptor for the preprotein-SecB complex and as an ATP-driven molecular motor driving the stepwise translocation of polypeptide chains across the membrane. The protein is Protein translocase subunit SecA of Paracoccus denitrificans (strain Pd 1222).